Reading from the N-terminus, the 433-residue chain is Serine--tRNA ligase (433 aa).

L-serine is bound at residue 235–237 (TSE). 266–268 (RSE) provides a ligand contact to ATP. Position 289 (Glu289) interacts with L-serine. 353–356 (EISS) provides a ligand contact to ATP. Ser388 contributes to the L-serine binding site.

Belongs to the class-II aminoacyl-tRNA synthetase family. Type-1 seryl-tRNA synthetase subfamily. Homodimer. The tRNA molecule binds across the dimer.

It localises to the cytoplasm. It catalyses the reaction tRNA(Ser) + L-serine + ATP = L-seryl-tRNA(Ser) + AMP + diphosphate + H(+). The enzyme catalyses tRNA(Sec) + L-serine + ATP = L-seryl-tRNA(Sec) + AMP + diphosphate + H(+). It participates in aminoacyl-tRNA biosynthesis; selenocysteinyl-tRNA(Sec) biosynthesis; L-seryl-tRNA(Sec) from L-serine and tRNA(Sec): step 1/1. Its function is as follows. Catalyzes the attachment of serine to tRNA(Ser). Is also able to aminoacylate tRNA(Sec) with serine, to form the misacylated tRNA L-seryl-tRNA(Sec), which will be further converted into selenocysteinyl-tRNA(Sec). The polypeptide is Serine--tRNA ligase (Burkholderia cenocepacia (strain ATCC BAA-245 / DSM 16553 / LMG 16656 / NCTC 13227 / J2315 / CF5610) (Burkholderia cepacia (strain J2315))).